Here is a 73-residue protein sequence, read N- to C-terminus: Large ribosomal subunit protein bL31 (73 aa).

This sequence belongs to the bacterial ribosomal protein bL31 family. Type A subfamily. As to quaternary structure, part of the 50S ribosomal subunit. Contacts protein L9.

Functionally, binds the 23S rRNA and interacts with the tRNA in the E site. The protein is Large ribosomal subunit protein bL31 (rpmE) of Deinococcus radiodurans (strain ATCC 13939 / DSM 20539 / JCM 16871 / CCUG 27074 / LMG 4051 / NBRC 15346 / NCIMB 9279 / VKM B-1422 / R1).